Here is a 256-residue protein sequence, read N- to C-terminus: MALAKRIIPCLDVDNGRVVKGVKFENIRDAGDPVEIARRYNEQGADEITFLDITASVDGRDTTLHTVERMASQVFIPLTVGGGVRTVQDIRNLLNAGADKVSINTAAVFNPEFVGEAADRFGSQCIVVAIDAKKVSGPGETPRWEIFTHGGRKPTGLDAVEWAKKMEGLGAGEILLTSMDQDGMKNGFDLGVTRAISDALGIPVIASGGVGNLQHLADGILEGHASAVLAASIFHFGEYTVPEAKAYMASRGIVVR.

Residues D12 and D131 contribute to the active site.

The protein belongs to the HisA/HisF family. As to quaternary structure, heterodimer of HisH and HisF.

Its subcellular location is the cytoplasm. It carries out the reaction 5-[(5-phospho-1-deoxy-D-ribulos-1-ylimino)methylamino]-1-(5-phospho-beta-D-ribosyl)imidazole-4-carboxamide + L-glutamine = D-erythro-1-(imidazol-4-yl)glycerol 3-phosphate + 5-amino-1-(5-phospho-beta-D-ribosyl)imidazole-4-carboxamide + L-glutamate + H(+). It functions in the pathway amino-acid biosynthesis; L-histidine biosynthesis; L-histidine from 5-phospho-alpha-D-ribose 1-diphosphate: step 5/9. IGPS catalyzes the conversion of PRFAR and glutamine to IGP, AICAR and glutamate. The HisF subunit catalyzes the cyclization activity that produces IGP and AICAR from PRFAR using the ammonia provided by the HisH subunit. The chain is Imidazole glycerol phosphate synthase subunit HisF from Pseudomonas putida (strain GB-1).